A 314-amino-acid polypeptide reads, in one-letter code: DNA-directed RNA polymerase subunit alpha (314 aa).

Positions Met-1 to Thr-228 are alpha N-terminal domain (alpha-NTD). Positions Glu-246–Asp-314 are alpha C-terminal domain (alpha-CTD).

This sequence belongs to the RNA polymerase alpha chain family. As to quaternary structure, homodimer. The RNAP catalytic core consists of 2 alpha, 1 beta, 1 beta' and 1 omega subunit. When a sigma factor is associated with the core the holoenzyme is formed, which can initiate transcription.

The enzyme catalyses RNA(n) + a ribonucleoside 5'-triphosphate = RNA(n+1) + diphosphate. In terms of biological role, DNA-dependent RNA polymerase catalyzes the transcription of DNA into RNA using the four ribonucleoside triphosphates as substrates. The sequence is that of DNA-directed RNA polymerase subunit alpha from Bacillus cytotoxicus (strain DSM 22905 / CIP 110041 / 391-98 / NVH 391-98).